The chain runs to 367 residues: Cyclin-D5-1 (367 aa).

The tract at residues 307-333 is disordered; that stretch reads QPTSPASKSTTTTTGKRSSSSSCSEST.

This sequence belongs to the cyclin family. Cyclin D subfamily.

The polypeptide is Cyclin-D5-1 (CYCD5-1) (Oryza sativa subsp. japonica (Rice)).